Consider the following 138-residue polypeptide: Probable phospholipase A2 homolog 1 (138 aa).

The N-terminal stretch at Met-1–Ala-21 is a signal peptide. 6 disulfide bridges follow: Cys-29/Cys-56, Cys-33/Cys-62, Cys-38/Cys-109, Cys-49/Cys-69, Cys-68/Cys-93, and Cys-75/Cys-86. The Ca(2+) site is built by Tyr-48, Gly-50, and Trp-53. Residue His-72 is part of the active site. Asp-73 contributes to the Ca(2+) binding site.

Belongs to the phospholipase A2 family. Ca(2+) is required as a cofactor.

The protein resides in the secreted. The enzyme catalyses a 1,2-diacyl-sn-glycero-3-phosphocholine + H2O = a 1-acyl-sn-glycero-3-phosphocholine + a fatty acid + H(+). PA2 catalyzes the calcium-dependent hydrolysis of the 2-acyl groups in 3-sn-phosphoglycerides. Releases lysophospholipids (LPLs) and free fatty acids (FFAs) from membrane phospholipids in response to hormones and other external stimuli. The sequence is that of Probable phospholipase A2 homolog 1 (PLA2-I) from Oryza sativa subsp. japonica (Rice).